We begin with the raw amino-acid sequence, 459 residues long: Alcohol acyl transferase 1 allele GSd (459 aa).

Active-site proton acceptor residues include His164 and Asn385.

The protein belongs to the plant acyltransferase family. As to expression, expressed at very low levels in the cortex and skin of ripe fruit.

Its function is as follows. Involved in the biosynthesis of volatile esters which confer ripe apple fruit flavor. Alcohol acyl transferase that can use a wide range of alcohols as substrate to produce esters. In Malus domestica (Apple), this protein is Alcohol acyl transferase 1 allele GSd.